The sequence spans 482 residues: Cysteine--tRNA ligase (482 aa).

Cys-29 contacts Zn(2+). A 'HIGH' region motif is present at residues 31–41; it reads VTVYDYCHLGH. Residues Cys-213, His-238, and Glu-242 each contribute to the Zn(2+) site. A 'KMSKS' region motif is present at residues 275–279; sequence KMSKS. Residue Lys-278 participates in ATP binding.

It belongs to the class-I aminoacyl-tRNA synthetase family. As to quaternary structure, monomer. It depends on Zn(2+) as a cofactor.

It localises to the cytoplasm. It catalyses the reaction tRNA(Cys) + L-cysteine + ATP = L-cysteinyl-tRNA(Cys) + AMP + diphosphate. The chain is Cysteine--tRNA ligase from Gloeobacter violaceus (strain ATCC 29082 / PCC 7421).